A 142-amino-acid polypeptide reads, in one-letter code: FAD synthase (142 aa).

Residues Val9–Phe10, His14–His17, Asp93, and Tyr120 contribute to the ATP site.

The protein belongs to the archaeal FAD synthase family. In terms of assembly, homodimer. The cofactor is a divalent metal cation.

The enzyme catalyses FMN + ATP + H(+) = FAD + diphosphate. Its pathway is cofactor biosynthesis; FAD biosynthesis; FAD from FMN: step 1/1. Functionally, catalyzes the transfer of the AMP portion of ATP to flavin mononucleotide (FMN) to produce flavin adenine dinucleotide (FAD) coenzyme. This Thermoplasma volcanium (strain ATCC 51530 / DSM 4299 / JCM 9571 / NBRC 15438 / GSS1) protein is FAD synthase (ribL).